A 567-amino-acid polypeptide reads, in one-letter code: Malate synthase, glyoxysomal (567 aa).

Arginine 182 (proton acceptor) is an active-site residue. Residue aspartate 468 is the Proton donor of the active site. The Microbody targeting signal signature appears at 565–567 (SRL).

The protein belongs to the malate synthase family.

The protein resides in the glyoxysome. The catalysed reaction is glyoxylate + acetyl-CoA + H2O = (S)-malate + CoA + H(+). It participates in carbohydrate metabolism; glyoxylate cycle; (S)-malate from isocitrate: step 2/2. The sequence is that of Malate synthase, glyoxysomal from Ricinus communis (Castor bean).